A 496-amino-acid polypeptide reads, in one-letter code: Probable malate:quinone oxidoreductase (496 aa).

Belongs to the MQO family. Requires FAD as cofactor.

The catalysed reaction is (S)-malate + a quinone = a quinol + oxaloacetate. Its pathway is carbohydrate metabolism; tricarboxylic acid cycle; oxaloacetate from (S)-malate (quinone route): step 1/1. In Flavobacterium psychrophilum (strain ATCC 49511 / DSM 21280 / CIP 103535 / JIP02/86), this protein is Probable malate:quinone oxidoreductase.